Here is a 134-residue protein sequence, read N- to C-terminus: MQAMLPVILILLLPCIPLASTATRATPEQLRKCKFQQPWSFLDCYHEKSDFPTYWIVIVGIINILSCTFFSITIYPTFNFGWNSPNALGYPQEPDEHIPLQHIQQPLALVQYENEPQPSLPPAISYFNLTGGDD.

An N-terminal signal peptide occupies residues 1–21 (MQAMLPVILILLLPCIPLAST). A helical transmembrane segment spans residues 54-78 (YWIVIVGIINILSCTFFSITIYPTF).

Belongs to the adenoviridae E3_14 family. Phosphorylated on serine; O-glycosylated, but not N-glycosylated.

The protein resides in the host membrane. Functionally, down-regulates the EGF receptor and prevents cytolysis by TNF. The sequence is that of Early E3B 14.5 kDa protein from Homo sapiens (Human).